Reading from the N-terminus, the 317-residue chain is Protoheme IX farnesyltransferase (317 aa).

A run of 8 helical transmembrane segments spans residues 25–45 (FFAL…LVGM), 54–74 (PVIA…SGCL), 126–146 (LAAG…SMWL), 154–174 (IVIG…VVTG), 181–201 (LVLF…LALV), 227–244 (IVAY…PVAL), 249–271 (LIYG…QVYH), and 281–301 (AAMG…SALL).

It belongs to the UbiA prenyltransferase family. Protoheme IX farnesyltransferase subfamily.

It localises to the cell inner membrane. It carries out the reaction heme b + (2E,6E)-farnesyl diphosphate + H2O = Fe(II)-heme o + diphosphate. The protein operates within porphyrin-containing compound metabolism; heme O biosynthesis; heme O from protoheme: step 1/1. Converts heme B (protoheme IX) to heme O by substitution of the vinyl group on carbon 2 of heme B porphyrin ring with a hydroxyethyl farnesyl side group. This Methylobacterium sp. (strain 4-46) protein is Protoheme IX farnesyltransferase.